Here is an 874-residue protein sequence, read N- to C-terminus: Alanine--tRNA ligase (874 aa).

Residues histidine 564, histidine 568, cysteine 665, and histidine 669 each coordinate Zn(2+).

This sequence belongs to the class-II aminoacyl-tRNA synthetase family. Zn(2+) serves as cofactor.

It is found in the cytoplasm. It catalyses the reaction tRNA(Ala) + L-alanine + ATP = L-alanyl-tRNA(Ala) + AMP + diphosphate. In terms of biological role, catalyzes the attachment of alanine to tRNA(Ala) in a two-step reaction: alanine is first activated by ATP to form Ala-AMP and then transferred to the acceptor end of tRNA(Ala). Also edits incorrectly charged Ser-tRNA(Ala) and Gly-tRNA(Ala) via its editing domain. The chain is Alanine--tRNA ligase from Cupriavidus metallidurans (strain ATCC 43123 / DSM 2839 / NBRC 102507 / CH34) (Ralstonia metallidurans).